Reading from the N-terminus, the 394-residue chain is Cell division protein FtsZ (394 aa).

GTP contacts are provided by residues 21–25 (GGGGN), 108–110 (GTG), glutamate 139, arginine 143, and aspartate 187.

It belongs to the FtsZ family. As to quaternary structure, homodimer. Polymerizes to form a dynamic ring structure in a strictly GTP-dependent manner. Interacts directly with several other division proteins. Interacts with the SulA inhibitor.

It is found in the cytoplasm. Its function is as follows. Essential cell division protein that forms a contractile ring structure (Z ring) at the future cell division site. The regulation of the ring assembly controls the timing and the location of cell division. One of the functions of the FtsZ ring is to recruit other cell division proteins to the septum to produce a new cell wall between the dividing cells. Binds GTP and shows GTPase activity. This chain is Cell division protein FtsZ, found in Pseudomonas aeruginosa (strain ATCC 15692 / DSM 22644 / CIP 104116 / JCM 14847 / LMG 12228 / 1C / PRS 101 / PAO1).